Consider the following 287-residue polypeptide: Phosphatidylserine decarboxylase proenzyme (287 aa).

Catalysis depends on charge relay system; for autoendoproteolytic cleavage activity residues Asp-89, His-146, and Ser-252. The active-site Schiff-base intermediate with substrate; via pyruvic acid; for decarboxylase activity is Ser-252. Ser-252 carries the post-translational modification Pyruvic acid (Ser); by autocatalysis.

The protein belongs to the phosphatidylserine decarboxylase family. PSD-B subfamily. Prokaryotic type I sub-subfamily. In terms of assembly, heterodimer of a large membrane-associated beta subunit and a small pyruvoyl-containing alpha subunit. Pyruvate serves as cofactor. Post-translationally, is synthesized initially as an inactive proenzyme. Formation of the active enzyme involves a self-maturation process in which the active site pyruvoyl group is generated from an internal serine residue via an autocatalytic post-translational modification. Two non-identical subunits are generated from the proenzyme in this reaction, and the pyruvate is formed at the N-terminus of the alpha chain, which is derived from the carboxyl end of the proenzyme. The autoendoproteolytic cleavage occurs by a canonical serine protease mechanism, in which the side chain hydroxyl group of the serine supplies its oxygen atom to form the C-terminus of the beta chain, while the remainder of the serine residue undergoes an oxidative deamination to produce ammonia and the pyruvoyl prosthetic group on the alpha chain. During this reaction, the Ser that is part of the protease active site of the proenzyme becomes the pyruvoyl prosthetic group, which constitutes an essential element of the active site of the mature decarboxylase.

The protein resides in the cell membrane. It carries out the reaction a 1,2-diacyl-sn-glycero-3-phospho-L-serine + H(+) = a 1,2-diacyl-sn-glycero-3-phosphoethanolamine + CO2. Its pathway is phospholipid metabolism; phosphatidylethanolamine biosynthesis; phosphatidylethanolamine from CDP-diacylglycerol: step 2/2. In terms of biological role, catalyzes the formation of phosphatidylethanolamine (PtdEtn) from phosphatidylserine (PtdSer). The protein is Phosphatidylserine decarboxylase proenzyme of Shewanella amazonensis (strain ATCC BAA-1098 / SB2B).